Consider the following 304-residue polypeptide: Galactose 1-dehydrogenase (304 aa).

The protein belongs to the Gfo/Idh/MocA family. In terms of assembly, homodimer.

It is found in the cytoplasm. The catalysed reaction is D-galactose + NAD(+) = D-galactono-1,4-lactone + NADH + H(+). It functions in the pathway carbohydrate metabolism; galactose metabolism. Functionally, catalyzes the dehydrogenation of D-galactose by either NAD(+) or NADP(+). Oxidizes following sugars in decreasing order: D-fucose &gt; D-galactose &gt; L-arabinose &gt; 2-deoxy-D-galactose &gt;&gt; 4-deoxy-D-galactose &gt; 2-deoxy-2-amino-D-galactose. This Pseudomonas fluorescens protein is Galactose 1-dehydrogenase (gal).